The sequence spans 502 residues: Cytochrome P450 3A40 (502 aa).

C443 serves as a coordination point for heme.

This sequence belongs to the cytochrome P450 family. Heme is required as a cofactor.

The protein resides in the endoplasmic reticulum membrane. Its subcellular location is the microsome membrane. The enzyme catalyses an organic molecule + reduced [NADPH--hemoprotein reductase] + O2 = an alcohol + oxidized [NADPH--hemoprotein reductase] + H2O + H(+). In Oryzias latipes (Japanese rice fish), this protein is Cytochrome P450 3A40 (cyp3a40).